A 1398-amino-acid chain; its full sequence is DNA-directed RNA polymerase subunit beta' (1398 aa).

Residues Cys73, Cys75, Cys88, and Cys91 each coordinate Zn(2+). Mg(2+) is bound by residues Asp464, Asp466, and Asp468. Residues Cys823, Cys897, Cys904, and Cys907 each coordinate Zn(2+).

The protein belongs to the RNA polymerase beta' chain family. In terms of assembly, the RNAP catalytic core consists of 2 alpha, 1 beta, 1 beta' and 1 omega subunit. When a sigma factor is associated with the core the holoenzyme is formed, which can initiate transcription. Requires Mg(2+) as cofactor. It depends on Zn(2+) as a cofactor.

It catalyses the reaction RNA(n) + a ribonucleoside 5'-triphosphate = RNA(n+1) + diphosphate. DNA-dependent RNA polymerase catalyzes the transcription of DNA into RNA using the four ribonucleoside triphosphates as substrates. This chain is DNA-directed RNA polymerase subunit beta', found in Gluconacetobacter diazotrophicus (strain ATCC 49037 / DSM 5601 / CCUG 37298 / CIP 103539 / LMG 7603 / PAl5).